Here is a 169-residue protein sequence, read N- to C-terminus: Disulfide bond formation protein B (169 aa).

Residues 1-14 (MMRFLNHCSQGRSA) are Cytoplasmic-facing. Residues 15–31 (WLLMILTALILESSALY) traverse the membrane as a helical segment. The Periplasmic portion of the chain corresponds to 32–49 (FQHVMKLQPCVMCIYERV). A disulfide bridge links Cys-41 with Cys-44. The helical transmembrane segment at 50–65 (ALFGVLSAGILGVIAP) threads the bilayer. Over 66 to 71 (KTPLRW) the chain is Cytoplasmic. Residues 72–89 (LAIILWIYSAWGGLQLAW) traverse the membrane as a helical segment. Over 90-144 (QHTMMQLHPSPFNTCDFFVNFPSWLALNQWLPSVFEATGDCSVRQWQFLTLEMPQ) the chain is Periplasmic. Residues Cys-104 and Cys-130 are joined by a disulfide bond. The chain crosses the membrane as a helical span at residues 145–163 (WLVGIFAAYLVVAALVLIS). Over 164-169 (QFFSRK) the chain is Cytoplasmic.

Belongs to the DsbB family.

It is found in the cell inner membrane. Its function is as follows. Required for disulfide bond formation in some periplasmic proteins. Acts by oxidizing the DsbA protein. This Photorhabdus laumondii subsp. laumondii (strain DSM 15139 / CIP 105565 / TT01) (Photorhabdus luminescens subsp. laumondii) protein is Disulfide bond formation protein B.